An 842-amino-acid chain; its full sequence is MDAPGGGGGGGGGGGGVDAGEPVWDWGNLLDFAVHDDDSLVLPWGDDSIGIEADPAEAALLPPAPSPQPAEAEAEAAGPASLPSSMQAEGSKRRVRKRDPRLVCPNYLAGRVPCACPEIDEMAAALEVEDVATELLAGARKKPKGAGRGSGAAVGGSGGGASRGTPAEMKCQVPGCEADIRELKGYHRRHRVCLRCAHAAAVMLDGVQKRYCQQCGKFHILLDFDEDKRSCRRKLERHNKRRRRKPDSKGILEKDIDDQLDFSADGSGDGELREENIDVTTSETLETVLSNKVLDRETPVGSDDVLSSPTCAQPSLQIDQSKSLVTFAASVEACLGTKQENTKLTNSPVHDTKSTYSSSCPTGRVSFKLYDWNPAEFPRRLRHQIFEWLSSMPVELEGYIRPGCTILTVFVAMPQHMWDKLSEDTGNLVKSLVNAPNSLLLGKGAFFIHVNNMIFQVLKDGATLTSTRLEVQSPRIHYVHPSWFEAGKPIDLILCGSSLDQPKFRSLVSFDGLYLKHDCRRILSHETFDCIGSGEHILDSQHEIFRINITTSKLDTHGPAFVEVENMFGLSNFVPILVGSKHLCSELEQIHDALCGSSDISSDPCELRGLRQTAMLGFLIDIGWLIRKPSIDEFQNLLSLANIQRWICMMKFLIQNDFINVLEIIVNSLDNIIGSELLSNLEKGRLENHVTEFLGYVSEARNIVDNRPKYDKQRQVDTRWAGDYAPNQPKLGISVPLAESTGTSGEHDLHSTNAASGEEENMPLVTKALPHRQCCHPETSARWLNAASIGAFPGGAMRMRLATTVVIGAVVCFAACVVLFHPHRVGVLAAPVKRYLSRNYSS.

Positions 1-18 (MDAPGGGGGGGGGGGGVD) are enriched in gly residues. Disordered stretches follow at residues 1–22 (MDAP…AGEP), 59–97 (ALLP…RVRK), and 140–168 (RKKP…TPAE). A compositionally biased stretch (low complexity) spans 69 to 85 (PAEAEAEAAGPASLPSS). The segment covering 146-162 (AGRGSGAAVGGSGGGAS) has biased composition (gly residues). An SBP-type; atypical zinc finger spans residues 168-245 (EMKCQVPGCE…ERHNKRRRRK (78 aa)). Cys171, Cys176, Cys193, Cys196, Cys212, Cys215, His219, and Cys231 together coordinate Zn(2+). Residues 228-244 (KRSCRRKLERHNKRRRR) carry the Bipartite nuclear localization signal motif. Residues 236 to 246 (ERHNKRRRRKP) are compositionally biased toward basic residues. The interval 236–256 (ERHNKRRRRKPDSKGILEKDI) is disordered.

Ubiquitous.

It localises to the nucleus. In terms of biological role, trans-acting factor that binds specifically to the consensus nucleotide sequence 5'-TNCGTACAA-3'. The sequence is that of Squamosa promoter-binding-like protein 9 (SPL9) from Oryza sativa subsp. japonica (Rice).